We begin with the raw amino-acid sequence, 68 residues long: Probable Sec-independent protein translocase protein TatE (68 aa).

Residues 1–21 (MGEISITKLLVVAALIILVFG) traverse the membrane as a helical segment. The tract at residues 43 to 68 (MNEDDDSAKKTTAEEEAPAQKLSHKE) is disordered.

Belongs to the TatA/E family. TatE subfamily.

It is found in the cell inner membrane. In terms of biological role, part of the twin-arginine translocation (Tat) system that transports large folded proteins containing a characteristic twin-arginine motif in their signal peptide across membranes. TatE shares overlapping functions with TatA. This Klebsiella pneumoniae subsp. pneumoniae (strain ATCC 700721 / MGH 78578) protein is Probable Sec-independent protein translocase protein TatE.